We begin with the raw amino-acid sequence, 195 residues long: MNLIPTVIETTNRGERAYDIYSRLLKDRIIMLGSAIDDNVANSIVSQLLFLQAQDSEKDIYLYINSPGGSVTAGFAIYDTIQHIKPDVQTICIGMAASMGSFLLAAGAKGKRFALPNAEVMIHQPLGGAQGQATEIEIAANHILKTREKLNKILAERTGQSIEKIQKDTDRDNFLTADEAKEYGLIDNVMQPEDK.

Ser98 functions as the Nucleophile in the catalytic mechanism. Residue His123 is part of the active site.

It belongs to the peptidase S14 family. In terms of assembly, fourteen ClpP subunits assemble into 2 heptameric rings which stack back to back to give a disk-like structure with a central cavity, resembling the structure of eukaryotic proteasomes.

It is found in the cytoplasm. The enzyme catalyses Hydrolysis of proteins to small peptides in the presence of ATP and magnesium. alpha-casein is the usual test substrate. In the absence of ATP, only oligopeptides shorter than five residues are hydrolyzed (such as succinyl-Leu-Tyr-|-NHMec, and Leu-Tyr-Leu-|-Tyr-Trp, in which cleavage of the -Tyr-|-Leu- and -Tyr-|-Trp bonds also occurs).. Cleaves peptides in various proteins in a process that requires ATP hydrolysis. Has a chymotrypsin-like activity. Plays a major role in the degradation of misfolded proteins. The chain is ATP-dependent Clp protease proteolytic subunit from Staphylococcus haemolyticus (strain JCSC1435).